The sequence spans 312 residues: Transcription factor Ouib (312 aa).

Residues 4–79 (IVCRVCGRQK…IKTQTKWLTI (76 aa)) enclose the ZAD domain. Residues C6, C9, C52, and C55 each contribute to the Zn(2+) site. 5 C2H2-type zinc fingers span residues 167 to 189 (YICE…MRKH), 195 to 217 (FGCK…HRVH), 223 to 245 (FACR…ERTH), 251 to 273 (YVCE…MVIH), and 279 to 303 (FRCD…SMMH).

Expressed predominantly in the prothoracic gland during embryonic and larval development.

It localises to the nucleus. In terms of biological role, transcription factor required for ecdysteroid production in the prothoracic gland by activating transcription of the ecdysteroid biosynthesis gene spok. Binds to the 5'-AGCTTTATTATTTAG-3' DNA sequence in the spok enhancer region. The polypeptide is Transcription factor Ouib (Drosophila melanogaster (Fruit fly)).